We begin with the raw amino-acid sequence, 167 residues long: NADH-quinone oxidoreductase subunit B 2 (167 aa).

Residues Cys38, Cys39, Cys104, and Cys133 each contribute to the [4Fe-4S] cluster site.

The protein belongs to the complex I 20 kDa subunit family. In terms of assembly, NDH-1 is composed of 14 different subunits. Subunits NuoB, C, D, E, F, and G constitute the peripheral sector of the complex. It depends on [4Fe-4S] cluster as a cofactor.

It localises to the cell membrane. It carries out the reaction a quinone + NADH + 5 H(+)(in) = a quinol + NAD(+) + 4 H(+)(out). Its function is as follows. NDH-1 shuttles electrons from NADH, via FMN and iron-sulfur (Fe-S) centers, to quinones in the respiratory chain. The immediate electron acceptor for the enzyme in this species is believed to be ubiquinone. Couples the redox reaction to proton translocation (for every two electrons transferred, four hydrogen ions are translocated across the cytoplasmic membrane), and thus conserves the redox energy in a proton gradient. The polypeptide is NADH-quinone oxidoreductase subunit B 2 (Roseiflexus sp. (strain RS-1)).